The following is a 273-amino-acid chain: Hydroxyethylthiazole kinase (273 aa).

Position 47 (Met47) interacts with substrate. Residues Arg123 and Thr169 each coordinate ATP. Gly196 contacts substrate.

Belongs to the Thz kinase family. Mg(2+) serves as cofactor.

It carries out the reaction 5-(2-hydroxyethyl)-4-methylthiazole + ATP = 4-methyl-5-(2-phosphooxyethyl)-thiazole + ADP + H(+). The protein operates within cofactor biosynthesis; thiamine diphosphate biosynthesis; 4-methyl-5-(2-phosphoethyl)-thiazole from 5-(2-hydroxyethyl)-4-methylthiazole: step 1/1. In terms of biological role, catalyzes the phosphorylation of the hydroxyl group of 4-methyl-5-beta-hydroxyethylthiazole (THZ). The sequence is that of Hydroxyethylthiazole kinase from Desulfotalea psychrophila (strain LSv54 / DSM 12343).